Consider the following 298-residue polypeptide: 5,10-methylenetetrahydrofolate reductase (298 aa).

Glutamate 28 serves as the catalytic Proton donor/acceptor. Position 59 (threonine 59) interacts with NADH. FAD is bound by residues tyrosine 60, alanine 62, histidine 88, arginine 118, glycine 119, aspartate 120, alanine 132, tyrosine 152, histidine 156, alanine 159, aspartate 165, asparagine 168, and lysine 172. Aspartate 120 serves as a coordination point for (6S)-5-methyl-5,6,7,8-tetrahydrofolate. Glutamine 183 serves as a coordination point for NADH. (6S)-5-methyl-5,6,7,8-tetrahydrofolate contacts are provided by glutamine 183, glutamine 219, and arginine 279.

This sequence belongs to the methylenetetrahydrofolate reductase family. Requires FAD as cofactor.

The enzyme catalyses (6S)-5-methyl-5,6,7,8-tetrahydrofolate + NAD(+) = (6R)-5,10-methylene-5,6,7,8-tetrahydrofolate + NADH + H(+). It participates in one-carbon metabolism; tetrahydrofolate interconversion. The protein operates within amino-acid biosynthesis; L-methionine biosynthesis via de novo pathway. In terms of biological role, catalyzes the NADH-dependent reduction of 5,10-methylenetetrahydrofolate to 5-methyltetrahydrofolate. Is required to provide the methyl group necessary for methionine synthetase to convert homocysteine to methionine; the methyl group is given by 5-methyltetrahydrofolate. The polypeptide is 5,10-methylenetetrahydrofolate reductase (metF) (Pectobacterium carotovorum subsp. carotovorum (Erwinia carotovora subsp. carotovora)).